We begin with the raw amino-acid sequence, 183 residues long: Secreted RxLR effector protein 41 (183 aa).

A signal peptide spans 1 to 18 (MLGFVTGVLAISAHVIVS). The short motif at 41 to 65 (RRLRSYETDTASARAEEGTSDIEER) is the RxLR-dEER element. The N-linked (GlcNAc...) asparagine glycan is linked to N88.

It belongs to the RxLR effector family.

Its subcellular location is the secreted. It is found in the host nucleus. The protein localises to the host cytoplasm. In terms of biological role, secreted effector that dos not suppress the host cell death induced by cell death-inducing proteins. The protein is Secreted RxLR effector protein 41 of Plasmopara viticola (Downy mildew of grapevine).